Consider the following 517-residue polypeptide: Zinc finger protein 215 (517 aa).

Residues 48 to 126 form the SCAN box domain; that stretch reads RQKFRHFQYL…KDMVTLIEDV (79 aa). One can recognise a KRAB domain in the interval 164 to 237; the sequence is VTFKDVVVEF…EKEIPRKTIF (74 aa). C2H2-type zinc fingers lie at residues 379–401, 407–429, 462–484, and 490–512; these read YECY…QIIH, YKCS…QKLH, YQCV…QMIH, and FKCK…QKLH.

The protein belongs to the krueppel C2H2-type zinc-finger protein family.

It localises to the nucleus. Functionally, may be involved in transcriptional regulation. This Homo sapiens (Human) protein is Zinc finger protein 215 (ZNF215).